An 856-amino-acid chain; its full sequence is MSLSEEQVRSFLDGNPTFAHQYFGKKLSPENVAGACEDGWLADCGSLRELCQVEESAALFELVQDMQESVNMERVVFKILRRLCTILHADRCSLFMYRQRNGIAELATRLFSVQPDSLLEDCLVPPDSEIVFPLDIGIVGHVAQTKKMINVQDVAECPHFSSFADELTDYVTKNILSTPIMNGKDVVAVIMAVNKLDGPCFTSEDEDVFTKYLNFATLNLKIYHLSYLHNCETRRGQVLLWSANKVFEELTDIERQFHKAFYTVRAYLNCERYSVGLLDMTKEKEFFDVWPVLMGEAQPYSGPRTPDGREIVFYKVIDYILHGKEDIKVIPTPPADHWALASGLPTYVAESGFICNIMNASADEMFNFQEGPLDDSGWVIKNVLSMPIVNKKEEIVGVATFYNRKDGKPFDDQDEVLMESLTQFLGWSVLNTDTYDKMNKLENRKDIAQDMVLYHVRCDKDEIQEILPTRDRLGKEPADCEEDELGKILKEELPGPTKFDIYEFHFSDLECTELELVKCGIQMYYELGVVRKFQIPQEVLVRFLFSVSKAYRRITYHNWRHGFNVAQTMFTLLMTGKLKSYYTDLEAFAMVTAGLCHDIDHRGTNNLYQMKSQNPLAKLHGSSILERHHLEFGKFLLAEESLNIYQNLNRRQHEHVIHLMDIAIIATDLALYFKKRTMFQKIVDESKNYEDKKSWVEYLSLETTRKEIVMAMMMTACDLSAITKPWEVQSKVALLVAAEFWEQGDLERTVLDQQPIPMMDRNKAAELPKLQVGFIDFVCTFVYKEFSRFHEEILPMFDRLQNNRKEWKALADEYEAKVKALEEEKKKEEDRVAAKKVGTEVCNGGPAPKSSTCCIL.

An N-acetylserine modification is found at Ser-2. GAF domains follow at residues 71-220 and 252-429; these read NMER…TLNL and DIER…GWSV. The region spanning 481–814 is the PDEase domain; the sequence is EEDELGKILK…KEWKALADEY (334 aa). Residue His-557 is the Proton donor of the active site. A divalent metal cation is bound by residues His-561, His-597, Asp-598, and Asp-718. Cys-853 carries the S-geranylgeranyl cysteine lipid modification. Residues 854-856 constitute a propeptide, removed in mature form; it reads CIL.

Belongs to the cyclic nucleotide phosphodiesterase family. Oligomer composed of two catalytic chains (alpha and beta), an inhibitory chain (gamma) and the delta chain. It depends on a divalent metal cation as a cofactor.

The protein localises to the membrane. It localises to the cell projection. It is found in the cilium. Its subcellular location is the photoreceptor outer segment. It catalyses the reaction 3',5'-cyclic GMP + H2O = GMP + H(+). Rod-specific cGMP phosphodiesterase that catalyzes the hydrolysis of 3',5'-cyclic GMP. Necessary for the formation of a functional phosphodiesterase holoenzyme. Involved in retinal circadian rhythm photoentrainment via modulation of UVA and orange light-induced phase-shift of the retina clock. May participate in processes of transmission and amplification of the visual signal. In Mus musculus (Mouse), this protein is Rod cGMP-specific 3',5'-cyclic phosphodiesterase subunit beta.